Here is a 108-residue protein sequence, read N- to C-terminus: uncharacterized protein (108 aa).

Cystine bridges form between C44-C82, C60-C78, and C63-C91.

Belongs to the arthropod CHH/MIH/GIH/VIH hormone family.

This is an uncharacterized protein from Caenorhabditis elegans.